Here is a 250-residue protein sequence, read N- to C-terminus: Corrinoid adenosyltransferase MMAB (250 aa).

A mitochondrion-targeting transit peptide spans 1–32 (MAVCGLGSRLGLGSRLGLRGCFGAARLLYPRF). Positions 34-59 (SRGPQGVEDGDRPQPSSKTPRIPKIY) are disordered. ATP is bound by residues 60–63 (TKTG), 68–69 (SS), and Lys-78. Ser-134 carries the phosphoserine modification. 190–194 (RRAER) provides a ligand contact to ATP. Lys-211 is subject to N6-succinyllysine. Asn-214 provides a ligand contact to ATP. Position 230 is an N6-acetyllysine; alternate (Lys-230). Lys-230 carries the post-translational modification N6-succinyllysine; alternate.

Belongs to the Cob(I)alamin adenosyltransferase family. Homotrimer. Expressed in liver and skeletal muscle.

Its subcellular location is the mitochondrion. It carries out the reaction cob(I)alamin-[corrinoid adenosyltransferase] + ATP = apo-[corrinoid adenosyltransferase] + adenosylcob(III)alamin + triphosphate. Its function is as follows. Converts cob(I)alamin to adenosylcobalamin (adenosylcob(III)alamin), a coenzyme for methylmalonyl-CoA mutase, therefore participates in the final step of the vitamin B12 conversion. Generates adenosylcobalamin (AdoCbl) and directly delivers the cofactor to MUT in a transfer that is stimulated by ATP-binding to MMAB and gated by MMAA. This Homo sapiens (Human) protein is Corrinoid adenosyltransferase MMAB.